The sequence spans 427 residues: Adenylosuccinate synthetase (427 aa).

GTP contacts are provided by residues 12-18 and 40-42; these read GDEGKGK and GHT. Aspartate 13 (proton acceptor) is an active-site residue. Residues aspartate 13 and glycine 40 each contribute to the Mg(2+) site. IMP is bound by residues 13-16, 38-41, threonine 128, arginine 142, glutamine 223, threonine 238, and arginine 302; these read DEGK and NAGH. The active-site Proton donor is the histidine 41. A substrate-binding site is contributed by 298 to 304; it reads TTTGRNR. GTP-binding positions include arginine 304, 330–332, and 412–414; these read KLD and GVG.

This sequence belongs to the adenylosuccinate synthetase family. Homodimer. It depends on Mg(2+) as a cofactor.

It is found in the cytoplasm. It catalyses the reaction IMP + L-aspartate + GTP = N(6)-(1,2-dicarboxyethyl)-AMP + GDP + phosphate + 2 H(+). The protein operates within purine metabolism; AMP biosynthesis via de novo pathway; AMP from IMP: step 1/2. Plays an important role in the de novo pathway of purine nucleotide biosynthesis. Catalyzes the first committed step in the biosynthesis of AMP from IMP. This Thermobifida fusca (strain YX) protein is Adenylosuccinate synthetase.